Reading from the N-terminus, the 64-residue chain is Small ribosomal subunit protein bS21 (64 aa).

The segment at 26-64 is disordered; sequence DGILSEARRRTRFERPPTRRKRKDAAKRRLAIKAARKAT. A compositionally biased stretch (basic residues) spans 43 to 64; it reads TRRKRKDAAKRRLAIKAARKAT.

It belongs to the bacterial ribosomal protein bS21 family.

The chain is Small ribosomal subunit protein bS21 from Dehalococcoides mccartyi (strain ATCC BAA-2100 / JCM 16839 / KCTC 5957 / BAV1).